The chain runs to 284 residues: RNase adapter protein RapZ (284 aa).

8–15 (GRSGSGKS) is an ATP binding site. 56 to 59 (DVRN) is a binding site for GTP. The tract at residues 266–284 (RSRGKNVQSRHRTLEKRKT) is RNA-binding.

This sequence belongs to the RapZ-like family. RapZ subfamily. As to quaternary structure, homotrimer.

Modulates the synthesis of GlmS, by affecting the processing and stability of the regulatory small RNA GlmZ. When glucosamine-6-phosphate (GlcN6P) concentrations are high in the cell, RapZ binds GlmZ and targets it to cleavage by RNase E. Consequently, GlmZ is inactivated and unable to activate GlmS synthesis. Under low GlcN6P concentrations, RapZ is sequestered and inactivated by an other regulatory small RNA, GlmY, preventing GlmZ degradation and leading to synthesis of GlmS. The sequence is that of RNase adapter protein RapZ from Salmonella typhi.